A 462-amino-acid polypeptide reads, in one-letter code: Proteases secretion protein PrtF (462 aa).

Residues 1-23 (MRRKAVLLTVVLSLSGGSAQAMG) form the signal peptide.

Belongs to the outer membrane factor (OMF) (TC 1.B.17) family.

The protein localises to the cell outer membrane. In terms of biological role, involved in the secretion of proteases A, B, C and G. The chain is Proteases secretion protein PrtF (prtF) from Dickeya chrysanthemi (Pectobacterium chrysanthemi).